The primary structure comprises 139 residues: Glucanase inhibitor protein 3 (139 aa).

Positions 1–138 (VLTLEKPSKF…GIEWINSVIK (138 aa)) constitute a Peptidase S1 domain. 2 cysteine pairs are disulfide-bonded: Cys61–Cys73 and Cys83–Cys114.

The protein belongs to the peptidase S1 family.

It is found in the secreted. Its function is as follows. Secreted effector that suppresses host plant glucan elicitor-mediated defense responses. Targets host endoglucanases and inhibits the endoglucanase-mediated release of elicitor-active glucan oligosaccharides from P.sojae cell walls. The sequence is that of Glucanase inhibitor protein 3 from Phytophthora sojae (Soybean stem and root rot agent).